Reading from the N-terminus, the 421-residue chain is ATP-dependent RNA helicase RhlB (421 aa).

A Q motif motif is present at residues 9–37 (QKFSDFALHPAVIEALEKKGFHNCTPIQA). Positions 40-219 (LPLTLEGRDV…FEQMNNAEYV (180 aa)) constitute a Helicase ATP-binding domain. 53–60 (AQTGTGKT) provides a ligand contact to ATP. The DEAD box motif lies at 165-168 (DEAD). The region spanning 245–390 (RLLQTLLEEE…VSKYNPDALM (146 aa)) is the Helicase C-terminal domain. Positions 396 to 421 (PLRLTRARPGNGPRRNGPPRNRRRSG) are disordered. Residues 403 to 414 (RPGNGPRRNGPP) show a composition bias toward low complexity.

The protein belongs to the DEAD box helicase family. RhlB subfamily. Component of the RNA degradosome, which is a multiprotein complex involved in RNA processing and mRNA degradation.

The protein resides in the cytoplasm. It catalyses the reaction ATP + H2O = ADP + phosphate + H(+). In terms of biological role, DEAD-box RNA helicase involved in RNA degradation. Has RNA-dependent ATPase activity and unwinds double-stranded RNA. This chain is ATP-dependent RNA helicase RhlB, found in Klebsiella pneumoniae subsp. pneumoniae (strain ATCC 700721 / MGH 78578).